A 346-amino-acid chain; its full sequence is N(4)-(beta-N-acetylglucosaminyl)-L-asparaginase (346 aa).

Positions 1-23 are cleaved as a signal peptide; that stretch reads MERKSNLSLLLLLLVLGMPLVRG. The N-linked (GlcNAc...) asparagine glycan is linked to asparagine 38. Disulfide bonds link cysteine 64/cysteine 69 and cysteine 163/cysteine 179. Residue threonine 206 is the Nucleophile of the active site. Substrate is bound by residues 234–237 and 257–260; these read RVGD and TGDG. The cysteines at positions 286 and 306 are disulfide-linked. Asparagine 310 is a glycosylation site (N-linked (GlcNAc...) asparagine). An intrachain disulfide couples cysteine 317 to cysteine 345.

Belongs to the Ntn-hydrolase family. As to quaternary structure, heterotetramer of two alpha and two beta chains arranged as a dimer of alpha/beta heterodimers. Post-translationally, cleaved into an alpha and beta chain by autocatalysis; this activates the enzyme. The N-terminal residue of the beta subunit is responsible for the nucleophile hydrolase activity. In terms of processing, N-glycosylated.

Its subcellular location is the lysosome. The enzyme catalyses N(4)-(beta-N-acetyl-D-glucosaminyl)-L-asparagine + H2O = N-acetyl-beta-D-glucosaminylamine + L-aspartate + H(+). In terms of biological role, cleaves the GlcNAc-Asn bond which joins oligosaccharides to the peptide of asparagine-linked glycoproteins. The sequence is that of N(4)-(beta-N-acetylglucosaminyl)-L-asparaginase (Aga) from Mus musculus (Mouse).